Consider the following 279-residue polypeptide: Phosphatidylglycerol--prolipoprotein diacylglyceryl transferase (279 aa).

Transmembrane regions (helical) follow at residues 4–24 (IGPL…FLGY), 44–64 (VVFW…VLTS), 76–96 (LYIW…GLTF), and 104–124 (GYPL…GIVA). Arginine 126 serves as a coordination point for a 1,2-diacyl-sn-glycero-3-phospho-(1'-sn-glycerol). The next 3 membrane-spanning stretches (helical) occupy residues 182–202 (LTQV…LYWL), 206–226 (PFYG…RSVL), and 245–265 (LGIG…LLSL).

This sequence belongs to the Lgt family.

It localises to the cell inner membrane. It catalyses the reaction L-cysteinyl-[prolipoprotein] + a 1,2-diacyl-sn-glycero-3-phospho-(1'-sn-glycerol) = an S-1,2-diacyl-sn-glyceryl-L-cysteinyl-[prolipoprotein] + sn-glycerol 1-phosphate + H(+). It functions in the pathway protein modification; lipoprotein biosynthesis (diacylglyceryl transfer). Functionally, catalyzes the transfer of the diacylglyceryl group from phosphatidylglycerol to the sulfhydryl group of the N-terminal cysteine of a prolipoprotein, the first step in the formation of mature lipoproteins. The chain is Phosphatidylglycerol--prolipoprotein diacylglyceryl transferase from Thermus thermophilus (strain ATCC 27634 / DSM 579 / HB8).